The primary structure comprises 74 residues: Cytochrome c oxidase subunit 6C (74 aa).

The Mitochondrial matrix segment spans residues 2-12 (STALAKPQMRG). The helical transmembrane segment at 13-53 (LLARRLRFHIVGAFMVSLGFATFYKFAVAEKRKKAYADFYR) threads the bilayer. The Mitochondrial intermembrane portion of the chain corresponds to 54–74 (NYDSMKDFEEMRKAGIFQSAK).

This sequence belongs to the cytochrome c oxidase subunit 6c family. As to quaternary structure, component of the cytochrome c oxidase (complex IV, CIV), a multisubunit enzyme composed of 14 subunits. The complex is composed of a catalytic core of 3 subunits MT-CO1, MT-CO2 and MT-CO3, encoded in the mitochondrial DNA, and 11 supernumerary subunits COX4I1 (or COX4I2), COX5A, COX5B, COX6A2 (or COX6A1), COX6B1 (or COX6B2), COX6C, COX7A1 (or COX7A2), COX7B, COX7C, COX8B and NDUFA4, which are encoded in the nuclear genome. The complex exists as a monomer or a dimer and forms supercomplexes (SCs) in the inner mitochondrial membrane with NADH-ubiquinone oxidoreductase (complex I, CI) and ubiquinol-cytochrome c oxidoreductase (cytochrome b-c1 complex, complex III, CIII), resulting in different assemblies (supercomplex SCI(1)III(2)IV(1) and megacomplex MCI(2)III(2)IV(2)).

The protein resides in the mitochondrion inner membrane. The protein operates within energy metabolism; oxidative phosphorylation. In terms of biological role, component of the cytochrome c oxidase, the last enzyme in the mitochondrial electron transport chain which drives oxidative phosphorylation. The respiratory chain contains 3 multisubunit complexes succinate dehydrogenase (complex II, CII), ubiquinol-cytochrome c oxidoreductase (cytochrome b-c1 complex, complex III, CIII) and cytochrome c oxidase (complex IV, CIV), that cooperate to transfer electrons derived from NADH and succinate to molecular oxygen, creating an electrochemical gradient over the inner membrane that drives transmembrane transport and the ATP synthase. Cytochrome c oxidase is the component of the respiratory chain that catalyzes the reduction of oxygen to water. Electrons originating from reduced cytochrome c in the intermembrane space (IMS) are transferred via the dinuclear copper A center (CU(A)) of subunit 2 and heme A of subunit 1 to the active site in subunit 1, a binuclear center (BNC) formed by heme A3 and copper B (CU(B)). The BNC reduces molecular oxygen to 2 water molecules using 4 electrons from cytochrome c in the IMS and 4 protons from the mitochondrial matrix. The chain is Cytochrome c oxidase subunit 6C (COX6C) from Bos taurus (Bovine).